Consider the following 424-residue polypeptide: Ankyrin repeat domain-containing protein 61 (424 aa).

ANK repeat units follow at residues 80–109, 113–169, 172–201, 205–234, 239–278, 282–311, and 315–348; these read LSFLPIHLAAKYRKAQSLLCLLEHGADPEA, QGFT…ARVD, HRHCPLHLATIYGTHLVLSILAQNGAQVNA, SSMTPLHMAADILNKEMMQTLIAWGASVNC, TGNTALKLAVSTASSKAGRLLAAGLGCIRLLLVHGAQVNA, DGQAAIHEACFGGREVIINLLLEFEANVNI, and NGESPIHMYLQRGSNIRDTALLARLLFRSYPLRL.

In Bos taurus (Bovine), this protein is Ankyrin repeat domain-containing protein 61 (ANKRD61).